We begin with the raw amino-acid sequence, 186 residues long: dCTP deaminase (186 aa).

A dCTP-binding site is contributed by K107 to R112. Residue E133 is the Proton donor/acceptor of the active site. Q152, Y166, and Q176 together coordinate dCTP.

The protein belongs to the dCTP deaminase family. As to quaternary structure, homotrimer.

It carries out the reaction dCTP + H2O + H(+) = dUTP + NH4(+). The protein operates within pyrimidine metabolism; dUMP biosynthesis; dUMP from dCTP (dUTP route): step 1/2. Its function is as follows. Catalyzes the deamination of dCTP to dUTP. This Chloroflexus aggregans (strain MD-66 / DSM 9485) protein is dCTP deaminase.